The chain runs to 574 residues: Sorting nexin-33 (574 aa).

In terms of domain architecture, SH3 spans 1 to 61; it reads MALKGRALYD…PASYVEIVRP (61 aa). Serine 77 carries the phosphoserine modification. The segment covering 79-90 has biased composition (polar residues); that stretch reads GTQGSLYSSPSM. Residues 79–116 are disordered; that stretch reads GTQGSLYSSPSMASPARSGGGSGFLSNPGSFEDDDDDD. Serine 92 is modified (phosphoserine). The PX domain maps to 230–340; that stretch reads FACSIEDPTK…HFLSCLDDKQ (111 aa). A BAR domain is found at 371 to 574; that stretch reads LQDVEDRVDT…EKTLHMYDHL (204 aa).

It belongs to the sorting nexin family. As to quaternary structure, homodimer (via BAR domain). Interacts with ADAM15. Interacts with FASLG. Interacts (via SH3 domain) with DNM1 and DNM2. Interacts with WASL. Interacts with FCHSD1 (via the F-BAR domain). Phosphorylated. In terms of tissue distribution, detected in brain (at protein level).

It localises to the cytoplasm. It is found in the cytosol. Its subcellular location is the membrane. The protein resides in the cytoplasmic vesicle membrane. Plays a role in the reorganization of the cytoskeleton, endocytosis and cellular vesicle trafficking via its interactions with membranes, WASL, DNM1 and DNM2. Acts both during interphase and at the end of mitotic cell divisions. Required for efficient progress through mitosis and cytokinesis. Required for normal formation of the cleavage furrow at the end of mitosis. Modulates endocytosis of cell-surface proteins, such as APP and PRNP; this then modulates the secretion of APP and PRNP peptides. Promotes membrane tubulation (in vitro). May promote the formation of macropinosomes. The protein is Sorting nexin-33 (Snx33) of Mus musculus (Mouse).